We begin with the raw amino-acid sequence, 380 residues long: Cytochrome b (380 aa).

Transmembrane regions (helical) follow at residues F33 to M53, W77 to I98, W113 to L133, and F178 to L198. Positions 83 and 97 each coordinate heme b. Heme b is bound by residues H182 and H196. H201 serves as a coordination point for a ubiquinone. The next 4 membrane-spanning stretches (helical) occupy residues Y226–N246, L288–H308, S320–G340, and F347–P367.

The protein belongs to the cytochrome b family. As to quaternary structure, the cytochrome bc1 complex contains 3 respiratory subunits (MT-CYB, CYC1 and UQCRFS1), 2 core proteins (UQCRC1 and UQCRC2) and probably 6 low-molecular weight proteins. The cofactor is heme b.

Its subcellular location is the mitochondrion inner membrane. Component of the ubiquinol-cytochrome c reductase complex (complex III or cytochrome b-c1 complex) that is part of the mitochondrial respiratory chain. The b-c1 complex mediates electron transfer from ubiquinol to cytochrome c. Contributes to the generation of a proton gradient across the mitochondrial membrane that is then used for ATP synthesis. This Lepisosteus oculatus (Spotted gar) protein is Cytochrome b (mt-cyb).